Reading from the N-terminus, the 532-residue chain is Flavin-containing monooxygenase 1 (532 aa).

Residues 1–510 (MVKRVAIVGA…TRTIQESPSS (510 aa)) lie on the Lumenal side of the membrane. Residues 9–13 (GAGVS), glutamate 32, 40–41 (LW), and 61–62 (NS) each bind FAD. Residues 60–61 (SN) and 195–198 (SGTD) each bind NADP(+). Residues 511–531 (FETLLKLFSFLALLIAVFLIF) form a helical membrane-spanning segment. Residue leucine 532 is a topological domain, cytoplasmic.

The protein belongs to the FMO family. Requires FAD as cofactor. As to expression, liver.

Its subcellular location is the endoplasmic reticulum membrane. It catalyses the reaction hypotaurine + NADPH + O2 + H(+) = taurine + NADP(+) + H2O. The catalysed reaction is hypotaurine + NADH + O2 + H(+) = taurine + NAD(+) + H2O. The enzyme catalyses trimethylamine + NADPH + O2 = trimethylamine N-oxide + NADP(+) + H2O. It carries out the reaction N,N-dimethylaniline + NADPH + O2 + H(+) = N,N-dimethylaniline N-oxide + NADP(+) + H2O. In terms of biological role, broad spectrum monooxygenase that catalyzes the oxygenation of a wide variety of nitrogen- and sulfur-containing compounds including xenobiotics. Catalyzes the S-oxygenation of hypotaurine to produce taurine, an organic osmolyte involved in cell volume regulation as well as a variety of cytoprotective and developmental processes. In vitro, catalyzes the N-oxygenation of trimethylamine (TMA) to produce trimethylamine N-oxide (TMAO) and could therefore participate to the detoxification of this compound that is generated by the action of gut microbiota from dietary precursors such as choline, choline containing compounds, betaine or L-carnitine. This is Flavin-containing monooxygenase 1 from Mus musculus (Mouse).